The primary structure comprises 526 residues: Probable feruloyl esterase B-1 (526 aa).

The signal sequence occupies residues 1-19; that stretch reads MPSLRRLLPFLAAGSAALA. Intrachain disulfides connect Cys-28/Cys-75 and Cys-63/Cys-114. Asn-53, Asn-85, Asn-98, and Asn-138 each carry an N-linked (GlcNAc...) asparagine glycan. Intrachain disulfides connect Cys-187–Cys-441, Cys-256–Cys-273, and Cys-282–Cys-291. Ser-188 acts as the Acyl-ester intermediate in catalysis. Asn-246 carries an N-linked (GlcNAc...) asparagine glycan. The Ca(2+) site is built by Asp-257, Asp-260, Ala-262, Asp-264, and Ile-266. N-linked (GlcNAc...) asparagine glycans are attached at residues Asn-287 and Asn-311. Active-site charge relay system residues include Asp-400 and His-440. 2 N-linked (GlcNAc...) asparagine glycosylation sites follow: Asn-490 and Asn-516. A disulfide bridge links Cys-503 with Cys-525.

This sequence belongs to the tannase family.

It is found in the secreted. The catalysed reaction is feruloyl-polysaccharide + H2O = ferulate + polysaccharide.. Functionally, involved in degradation of plant cell walls. Hydrolyzes the feruloyl-arabinose ester bond in arabinoxylans as well as the feruloyl-galactose and feruloyl-arabinose ester bonds in pectin. This Aspergillus flavus (strain ATCC 200026 / FGSC A1120 / IAM 13836 / NRRL 3357 / JCM 12722 / SRRC 167) protein is Probable feruloyl esterase B-1 (faeB-1).